A 1018-amino-acid polypeptide reads, in one-letter code: Pleckstrin homology domain-containing family M member 2 (1018 aa).

Methionine 1 carries the N-acetylmethionine modification. The segment at 1–289 is interaction with KIF5B; that stretch reads MEPREVKDRI…PDQPDACTEL (289 aa). One can recognise an RUN domain in the interval 36–158; sequence RNHDKVLQRL…IRFDLDLDAP (123 aa). 5 disordered regions span residues 210–367, 407–440, 452–520, 526–545, and 555–583; these read SAIA…SSEL, TWCS…SEGL, ESPS…DSQL, EPLV…EPGT, and DQPS…THPS. Over residues 230–245 the composition is skewed to low complexity; that stretch reads STASDLTSSKTSTKSP. Residues 258 to 270 show a composition bias toward polar residues; that stretch reads ETASSDTTPVHTT. A compositionally biased stretch (basic residues) spans 294 to 306; that stretch reads VTKKKKIGKKKKT. Composition is skewed to polar residues over residues 316–325 and 347–367; these read HPTSSQQKCG and VLAS…SSEL. A Phosphoserine modification is found at serine 423. The PH domain maps to 770–872; the sequence is TITKEGMLHY…WMQHLCQAVS (103 aa).

Interacts with KLC2 (via TPR repeats). Interacts with KIF5B. Interacts with BORCS5. Interacts (via RUN domain) with ARL8B (GTP-bound form); PLEKHM1 and PLEKHM2 compete for interaction with ARL8B. Interacts with ARL8A.

It localises to the cytoplasm. Its subcellular location is the lysosome membrane. Its function is as follows. Plays a role in lysosomes movement and localization at the cell periphery acting as an effector of ARL8B. Required for ARL8B to exert its effects on lysosome location, recruits kinesin-1 to lysosomes and hence direct their movement toward microtubule plus ends. Binding to ARL8B provides a link from lysosomal membranes to plus-end-directed motility. Critical factor involved in NK cell-mediated cytotoxicity. Drives the polarization of cytolytic granules and microtubule-organizing centers (MTOCs) toward the immune synapse between effector NK lymphocytes and target cells. Required for maintenance of the Golgi apparatus organization. May play a role in membrane tubulation. This is Pleckstrin homology domain-containing family M member 2 from Mus musculus (Mouse).